The chain runs to 377 residues: MIDPLDLTQRLIACPSVTPADAGAMAVIATALESIGFTVHRFAAGEAPDGPVENLFAIRGQGGPHFAFAGHSDVVPPGDGWTSDPFVPEIRGELLHGRGAVDMKGAIAAFIAAAARLGDHPGTISLIITGDEEGPATFGTVALIDWMKARGLCPDLCLVGEPTSTHRLGDMVKIGRRGSVNMWIENVGTQGHVAYPHLAANPIPALVKALDALAALHLDDGNAWFQPSNLEITTVDVGNAATNVIPAVARARLNIRFNDEHRGADLVELVRRTVAEHAPAATVRAVISGESFITPPGDFSALISAAIMKVTGLTPELSTTGGTSDARFLSKLCPVVEFGLCNATMHKLDEAVAIPDLHALADIYEDIVRTVLAHPGA.

Zn(2+) is bound at residue H71. D73 is an active-site residue. A Zn(2+)-binding site is contributed by D102. E132 functions as the Proton acceptor in the catalytic mechanism. Zn(2+) is bound by residues E133, E161, and H346.

It belongs to the peptidase M20A family. DapE subfamily. In terms of assembly, homodimer. The cofactor is Zn(2+). Co(2+) is required as a cofactor.

It carries out the reaction N-succinyl-(2S,6S)-2,6-diaminopimelate + H2O = (2S,6S)-2,6-diaminopimelate + succinate. The protein operates within amino-acid biosynthesis; L-lysine biosynthesis via DAP pathway; LL-2,6-diaminopimelate from (S)-tetrahydrodipicolinate (succinylase route): step 3/3. Its function is as follows. Catalyzes the hydrolysis of N-succinyl-L,L-diaminopimelic acid (SDAP), forming succinate and LL-2,6-diaminopimelate (DAP), an intermediate involved in the bacterial biosynthesis of lysine and meso-diaminopimelic acid, an essential component of bacterial cell walls. This Rhizorhabdus wittichii (strain DSM 6014 / CCUG 31198 / JCM 15750 / NBRC 105917 / EY 4224 / RW1) (Sphingomonas wittichii) protein is Succinyl-diaminopimelate desuccinylase.